The chain runs to 204 residues: uncharacterized protein (204 aa).

The signal sequence occupies residues 1–17 (MKRLVTGLLALSLFLAA). The segment at 17 to 102 (ACGQDSDQQK…NQSSNNQKSS (86 aa)) is disordered. Residue Cys-18 is the site of N-palmitoyl cysteine attachment. Residue Cys-18 is the site of S-diacylglycerol cysteine attachment. The segment covering 23–70 (DQQKDSNKEKDDKAKTEQQDKKTNDSSKDKKDNKDDSKDVNKDNKDNS) has biased composition (basic and acidic residues). Positions 71–102 (ANDNQQQSNSNATNNDQNQTNNNQSSNNQKSS) are enriched in low complexity.

Its subcellular location is the cell membrane. This is an uncharacterized protein from Staphylococcus aureus (strain Mu50 / ATCC 700699).